The chain runs to 147 residues: Plasminogen receptor (KT) (147 aa).

The Extracellular segment spans residues 1-52 (MGFIFSKSMNESMKNQKEFMLMNARLQLERQLIMQSEMRERQMAMQIAWSRE). A helical transmembrane segment spans residues 53-73 (FLKYFGTFFGLAAISLTAGAI). The Cytoplasmic portion of the chain corresponds to 74–78 (KKKKP). The helical transmembrane segment at 79-99 (AFLVPIVPLSFILTYQYDLGY) threads the bilayer. Residues 100–147 (GTLLERMKGEAEDILETEKSKLQLPRGMITFESIEKARKEQSRFFIDK) are Extracellular-facing.

In terms of assembly, interacts with PLAT and PLAUR. As to expression, expressed in peripheral blood cells and monocytes. Expressed in adrenal medulla.

The protein resides in the cell membrane. Functionally, receptor for plasminogen. Regulates urokinase plasminogen activator-dependent and stimulates tissue-type plasminogen activator-dependent cell surface plasminogen activation. Proposed to be part of a local catecholaminergic cell plasminogen activation system that regulates neuroendocrine prohormone processing. Involved in regulation of inflammatory response; regulates monocyte chemotactic migration and matrix metalloproteinase activation, such as of MMP2 and MMP9. This Homo sapiens (Human) protein is Plasminogen receptor (KT) (PLGRKT).